Here is a 304-residue protein sequence, read N- to C-terminus: N-acetylmuramic acid 6-phosphate etherase (304 aa).

Residues 58–221 form the SIS domain; it reads IAERIHRGGR…STGVMIKLGK (164 aa). Glu-86 (proton donor) is an active-site residue. The active site involves Glu-117.

The protein belongs to the GCKR-like family. MurNAc-6-P etherase subfamily. Homodimer.

It carries out the reaction N-acetyl-D-muramate 6-phosphate + H2O = N-acetyl-D-glucosamine 6-phosphate + (R)-lactate. It functions in the pathway amino-sugar metabolism; N-acetylmuramate degradation. Functionally, specifically catalyzes the cleavage of the D-lactyl ether substituent of MurNAc 6-phosphate, producing GlcNAc 6-phosphate and D-lactate. The chain is N-acetylmuramic acid 6-phosphate etherase from Clostridium beijerinckii (strain ATCC 51743 / NCIMB 8052) (Clostridium acetobutylicum).